The primary structure comprises 418 residues: Ankyrin repeat domain-containing protein 61 (418 aa).

ANK repeat units follow at residues 27–57, 75–104, 132–161, 167–196, 200–229, 234–273, 277–306, and 310–343; these read ALHS…NQPI, ESII…DPEV, NRTH…QVNT, NKRS…DVNA, ASMT…NVNC, TGNT…KVNA, KGQT…NVNI, and NGES…PLRM.

The chain is Ankyrin repeat domain-containing protein 61 (ANKRD61) from Homo sapiens (Human).